Here is a 319-residue protein sequence, read N- to C-terminus: Tetrahydromethanopterin S-methyltransferase subunit H (319 aa).

Belongs to the MtrH family. The complex is composed of 8 subunits; MtrA, MtrB, MtrC, MtrD, MtrE, MtrF, MtrG and MtrH.

The catalysed reaction is 5-methyl-5,6,7,8-tetrahydromethanopterin + coenzyme M + 2 Na(+)(in) = 5,6,7,8-tetrahydromethanopterin + methyl-coenzyme M + 2 Na(+)(out). Its pathway is one-carbon metabolism; methanogenesis from CO(2); methyl-coenzyme M from 5,10-methylene-5,6,7,8-tetrahydromethanopterin: step 2/2. Its function is as follows. Part of a complex that catalyzes the formation of methyl-coenzyme M and tetrahydromethanopterin from coenzyme M and methyl-tetrahydromethanopterin. This is an energy-conserving, sodium-ion translocating step. MtrH catalyzes the transfer of the methyl group from methyl-tetrahydromethanopterin to the corrinoid prosthetic group of MtrA. The sequence is that of Tetrahydromethanopterin S-methyltransferase subunit H from Methanococcus maripaludis (strain C5 / ATCC BAA-1333).